The sequence spans 315 residues: Ribonuclease Z (315 aa).

7 residues coordinate Zn(2+): His-62, His-64, Asp-66, His-67, His-144, Asp-215, and His-273. Catalysis depends on Asp-66, which acts as the Proton acceptor.

This sequence belongs to the RNase Z family. In terms of assembly, homodimer. Zn(2+) serves as cofactor.

The catalysed reaction is Endonucleolytic cleavage of RNA, removing extra 3' nucleotides from tRNA precursor, generating 3' termini of tRNAs. A 3'-hydroxy group is left at the tRNA terminus and a 5'-phosphoryl group is left at the trailer molecule.. Its function is as follows. Zinc phosphodiesterase, which displays some tRNA 3'-processing endonuclease activity. Probably involved in tRNA maturation, by removing a 3'-trailer from precursor tRNA. The sequence is that of Ribonuclease Z from Synechococcus sp. (strain CC9311).